The following is a 172-amino-acid chain: RNA silencing suppressor p19 (172 aa).

Residues 153-172 (EGNVSGGSPEGIEAFEKESE) form a disordered region.

It belongs to the tombusvirus protein p19 family. In terms of assembly, homodimer.

Viral suppressor of RNA silencing which binds specifically to silencing RNAs (siRNAs). Acts as a molecular caliper to specifically select siRNAs based on the length of the duplex region of the RNA. In Pelargonium zonale (PeNSV), this protein is RNA silencing suppressor p19.